A 49-amino-acid chain; its full sequence is Lysozyme C (49 aa).

Residues 1 to 49 (SKMKKCEFAKIAKEQHMDGYHGVSLADWVCLVNNESDFNTKAINRNKGI) enclose the C-type lysozyme domain. The active site involves Glu35.

It belongs to the glycosyl hydrolase 22 family. In terms of assembly, monomer.

Its subcellular location is the secreted. The enzyme catalyses Hydrolysis of (1-&gt;4)-beta-linkages between N-acetylmuramic acid and N-acetyl-D-glucosamine residues in a peptidoglycan and between N-acetyl-D-glucosamine residues in chitodextrins.. Functionally, lysozymes have primarily a bacteriolytic function; those in tissues and body fluids are associated with the monocyte-macrophage system and enhance the activity of immunoagents. The sequence is that of Lysozyme C (LYZ) from Pseudocheirus peregrinus (Common ring-tailed possum).